The chain runs to 156 residues: Ribosomal RNA large subunit methyltransferase H (156 aa).

Residues Leu73, Gly104, and 123–128 (LSALTL) each bind S-adenosyl-L-methionine.

It belongs to the RNA methyltransferase RlmH family. As to quaternary structure, homodimer.

It localises to the cytoplasm. It catalyses the reaction pseudouridine(1915) in 23S rRNA + S-adenosyl-L-methionine = N(3)-methylpseudouridine(1915) in 23S rRNA + S-adenosyl-L-homocysteine + H(+). Its function is as follows. Specifically methylates the pseudouridine at position 1915 (m3Psi1915) in 23S rRNA. This is Ribosomal RNA large subunit methyltransferase H from Shewanella loihica (strain ATCC BAA-1088 / PV-4).